A 378-amino-acid chain; its full sequence is Calponin homolog OV9M (378 aa).

A compositionally biased stretch (low complexity) spans 1 to 20; the sequence is MPAQPAQENAQDADDAQANA. Positions 1-35 are disordered; it reads MPAQPAQENAQDADDAQANATMETRVAGQGQPKRV. 7 Calponin-like repeats span residues 50–75, 98–123, 151–176, 197–222, 244–269, 285–310, and 330–355; these read IPSQ…RNTQ, VRLQ…RDVC, VRLQ…RRET, IPLQ…RRET, IPSQ…RWEV, VRLQ…RNTT, and IPSQ…RDVK. The disordered stretch occupies residues 175 to 194; that stretch reads ETTKMTDSKHPDYDHERPDQ. The segment at 230 to 256 is disordered; it reads HPEYDPESSIDSSTIPSQMGSNKYASQ. The span at 238–256 shows a compositional bias: polar residues; it reads SIDSSTIPSQMGSNKYASQ. The interval 331 to 352 is disordered; the sequence is PSQAGWNRGDSQKGMTGFGAPR.

The protein belongs to the calponin family. As to expression, found in the longitudinal muscles below the hypodermis.

In terms of biological role, could be involved in muscle contraction. The polypeptide is Calponin homolog OV9M (Onchocerca volvulus).